The chain runs to 623 residues: MSTENKQSLPAITLAAIGVVYGDIGTSPLYTLRECLSGQFGFGVERDAVFGFLSLIFWLLVFVVSFKYLTFVMRADNAGEGGILTLMSLAGRNTSARMTSVLVILGLIGGSFFYGEVVITPAISVMSAIEGLEIAAPSLDPYIVPLSIVVLTLLFMIQKHGTGMVGKLFAPIMLAWFLVLAVLGARSILNNPEVLQALNPVWAVHFFLEYKAVSFAALGAVVLSITGVEALYADMGHFGKLPIRVAWFSVVLPSLVLNYFGQGALLLKTPEAIKNPFFLLAPDWALIPMLILATLATVIASQAVISGVFSLTRQAVRLGYLSPMRIIHTSEMESGQIYIPVVNWLLYFAVVIVIVSFEHSSNLAAAYGIAVTGTMVLTSILFATAARKNWHWSRILVGLMVVAFLCVDVPLFSANLEKLFSGGWLPLSLGLVMFIIMTTWKSERFRLLRRMHEHGNSLDAMITSLEKSPPVRVPGTAVYMSRALNVIPFALLHNLKHNKVLHERVILLTLRTEDAPYVHNVKRVTLEQLSPTFWRVVASYGWRETPNVEEIFHRCGLEGLSCRMMETSFFMSHESLIIGDKRPWYLRLRGKLFLLLQRNALRAPDQFEIPPNRVIELGTQVEI.

12 helical membrane passes run 9–29 (LPAI…TSPL), 49–69 (VFGF…FKYL), 101–121 (VLVI…VITP), 137–157 (PSLD…LFMI), 163–183 (GMVG…LAVL), 212–232 (AVSF…EALY), 247–267 (WFSV…ALLL), 276–296 (PFFL…ATLA), 337–357 (IYIP…IVSF), 363–383 (LAAA…ILFA), 395–415 (ILVG…FSAN), and 419–439 (LFSG…IMTT).

It belongs to the HAK/KUP transporter (TC 2.A.72) family.

Its subcellular location is the cell inner membrane. The enzyme catalyses K(+)(in) + H(+)(in) = K(+)(out) + H(+)(out). Its function is as follows. Responsible for the low-affinity transport of potassium into the cell. Likely operates as a K(+):H(+) symporter. The polypeptide is Low affinity potassium transport system protein Kup (Cronobacter sakazakii (strain ATCC BAA-894) (Enterobacter sakazakii)).